A 186-amino-acid polypeptide reads, in one-letter code: 3-hydroxyanthranilate 3,4-dioxygenase (186 aa).

Position 44 (Arg-44) interacts with O2. The Fe cation site is built by His-48, Glu-54, and His-96. Position 54 (Glu-54) interacts with substrate. Positions 100 and 110 each coordinate substrate. The a divalent metal cation site is built by Cys-125, Cys-130, Cys-164, and Cys-167.

Belongs to the 3-HAO family. Requires Fe(2+) as cofactor.

The protein resides in the cytoplasm. It carries out the reaction 3-hydroxyanthranilate + O2 = (2Z,4Z)-2-amino-3-carboxymuconate 6-semialdehyde. Its pathway is cofactor biosynthesis; NAD(+) biosynthesis; quinolinate from L-kynurenine: step 3/3. Catalyzes the oxidative ring opening of 3-hydroxyanthranilate to 2-amino-3-carboxymuconate semialdehyde, which spontaneously cyclizes to quinolinate. The sequence is that of 3-hydroxyanthranilate 3,4-dioxygenase from Chaetomium globosum (strain ATCC 6205 / CBS 148.51 / DSM 1962 / NBRC 6347 / NRRL 1970) (Soil fungus).